A 273-amino-acid polypeptide reads, in one-letter code: Epithelial sodium channel subunit beta (273 aa).

Topologically, residues Asn1–Asn245 are extracellular. 5 disulfides stabilise this stretch: Cys92-Cys179, Cys117-Cys175, Cys121-Cys171, Cys130-Cys157, and Cys132-Cys146. The chain crosses the membrane as a helical span at residues Val246–Glu273.

It belongs to the amiloride-sensitive sodium channel (TC 1.A.6) family. SCNN1B subfamily. In terms of assembly, component of the heterotrimeric epithelial sodium channel (ENaC) composed of an alpha/SCNN1A, a beta/SCNN1B and a gamma/SCNN1G subunit.

Its subcellular location is the apical cell membrane. It localises to the cytoplasmic vesicle membrane. It catalyses the reaction Na(+)(in) = Na(+)(out). Its activity is regulated as follows. Originally identified and characterized by its inhibition by the diuretic drug amiloride. In terms of biological role, this is one of the three pore-forming subunits of the heterotrimeric epithelial sodium channel (ENaC), a critical regulator of sodium balance and fluid homeostasis. ENaC operates in epithelial tissues, where it mediates the electrodiffusion of sodium ions from extracellular fluid through the apical membrane of cells, with water following osmotically. It plays a key role in maintaining sodium homeostasis through electrogenic sodium reabsorption in the kidneys. Additionally, ENaC is essential for airway surface liquid homeostasis, which is crucial for proper mucus clearance. This is Epithelial sodium channel subunit beta from Aquarana catesbeiana (American bullfrog).